Consider the following 443-residue polypeptide: Xaa-Pro dipeptidase (443 aa).

Residues Asp-246, Asp-257, His-339, Glu-384, and Glu-423 each coordinate Mn(2+).

Belongs to the peptidase M24B family. Bacterial-type prolidase subfamily. Mn(2+) is required as a cofactor.

The catalysed reaction is Xaa-L-Pro dipeptide + H2O = an L-alpha-amino acid + L-proline. Splits dipeptides with a prolyl residue in the C-terminal position. The protein is Xaa-Pro dipeptidase of Escherichia fergusonii (strain ATCC 35469 / DSM 13698 / CCUG 18766 / IAM 14443 / JCM 21226 / LMG 7866 / NBRC 102419 / NCTC 12128 / CDC 0568-73).